A 377-amino-acid chain; its full sequence is Histidinol-phosphate aminotransferase (377 aa).

Lysine 230 is subject to N6-(pyridoxal phosphate)lysine.

Belongs to the class-II pyridoxal-phosphate-dependent aminotransferase family. Histidinol-phosphate aminotransferase subfamily. As to quaternary structure, homodimer. Pyridoxal 5'-phosphate serves as cofactor.

It carries out the reaction L-histidinol phosphate + 2-oxoglutarate = 3-(imidazol-4-yl)-2-oxopropyl phosphate + L-glutamate. The protein operates within amino-acid biosynthesis; L-histidine biosynthesis; L-histidine from 5-phospho-alpha-D-ribose 1-diphosphate: step 7/9. In Mycobacterium leprae (strain Br4923), this protein is Histidinol-phosphate aminotransferase.